The primary structure comprises 92 residues: MGRSLKKGVFVADHLLRKIETMNSKNEKRVIKTWSRASTIVPQMIGHTIAVHNGKEHLPVYVTEQMVGQKLGEFVPTRVFKGHAGKDKKGKR.

The protein belongs to the universal ribosomal protein uS19 family.

Protein S19 forms a complex with S13 that binds strongly to the 16S ribosomal RNA. This chain is Small ribosomal subunit protein uS19, found in Gloeobacter violaceus (strain ATCC 29082 / PCC 7421).